We begin with the raw amino-acid sequence, 251 residues long: Derlin-1 (251 aa).

An N-acetylserine modification is found at serine 2. The Cytoplasmic segment spans residues 2–15 (SDIGDWFRSIPAIT). A helical transmembrane segment spans residues 16 to 31 (RYWFAATVAVPLIGKL). Residues 32–69 (GIISPAYFFLWPEAFLYRFQIWRPFTATFYFPVGPGTG) lie on the Lumenal side of the membrane. Residues 70–89 (FLYLVNLYFLYQYSTRLEAG) form a helical membrane-spanning segment. Topologically, residues 90 to 94 (AFDGR) are cytoplasmic. Residues 95-115 (PADYLFMLLFNWICIVITGLA) form a helical membrane-spanning segment. Residues 116–122 (MDMQLLM) are Lumenal-facing. The helical transmembrane segment at 123–137 (IPLIMSVLYVWAQLN) threads the bilayer. Topologically, residues 138-154 (RDLIVSFWFGTRFKACY) are cytoplasmic. Residues 155 to 166 (LPWVILGFNYII) traverse the membrane as a helical segment. At 167 to 170 (GGSV) the chain is on the lumenal side. A helical transmembrane segment spans residues 171 to 189 (INELIGNLVGHLYFFLMFR). Residues 190–251 (YPMDLGGRNF…WGQGFRLGDQ (62 aa)) lie on the Cytoplasmic side of the membrane. Serine 201 is modified (phosphoserine). A Phosphothreonine modification is found at threonine 202. Serine 226 bears the Phosphoserine mark. Residues 229-251 (RAADQNGGGGRHNWGQGFRLGDQ) form a disordered region. The SHP-box motif lies at 241 to 248 (NWGQGFRL).

The protein belongs to the derlin family. In terms of assembly, homotetramer. The four subunits of the tetramer are arranged in a twofold symmetry. Forms homo- and heterooligomers with DERL2 and DERL3; binding to DERL3 is poorer than that between DERL2 and DERL3. Interacts (via SHP-box motif) with VCP. Interacts with AMFR, SELENOS, SEL1L, SELENOK and SYVN1, as well as with SEL1L-SYVN1 and VCP-SELENOS protein complexes; this interaction is weaker than that observed between DERL2 and these complexes. Interacts with NGLY1 and YOD1. Does not bind to EDEM1. Interacts with DNAJB9. Interacts with RNF103. Interacts with HM13. Interacts with XBP1 isoform 1 (via luminal/ectodomain domain); the interaction obviates the need for ectodomain shedding prior HM13/SPP-mediated XBP1 isoform 1 cleavage. Interacts with the signal recognition particle/SRP and the SRP receptor; in the process of endoplasmic reticulum stress-induced pre-emptive quality control. May interact with UBXN6. Interacts with ZFAND2B; probably through VCP. Interacts with CCDC47. Interacts with C18orf32. May interact with TRAM1. Forms a complex with SVIP and VCP/p97. In terms of tissue distribution, widely expressed, with lowest levels in brain and heart.

The protein resides in the endoplasmic reticulum membrane. Functional component of endoplasmic reticulum-associated degradation (ERAD) for misfolded lumenal proteins. Forms homotetramers which encircle a large channel traversing the endoplasmic reticulum (ER) membrane. This allows the retrotranslocation of misfolded proteins from the ER into the cytosol where they are ubiquitinated and degraded by the proteasome. The channel has a lateral gate within the membrane which provides direct access to membrane proteins with no need to reenter the ER lumen first. May mediate the interaction between VCP and the misfolded protein. Also involved in endoplasmic reticulum stress-induced pre-emptive quality control, a mechanism that selectively attenuates the translocation of newly synthesized proteins into the endoplasmic reticulum and reroutes them to the cytosol for proteasomal degradation. By controlling the steady-state expression of the IGF1R receptor, indirectly regulates the insulin-like growth factor receptor signaling pathway. The polypeptide is Derlin-1 (Mus musculus (Mouse)).